Consider the following 105-residue polypeptide: Transcription factor S (105 aa).

Zn(2+) contacts are provided by cysteine 5, cysteine 8, cysteine 21, cysteine 24, cysteine 66, cysteine 69, cysteine 94, and cysteine 97. Residues 5–24 (CPKCNNIMLPKNGRLKCTVC) form a C4-type zinc finger. A TFIIS-type zinc finger spans residues 62 to 102 (TRIECPSCGNMEASWWLQQTRCADEPETRFYKCKKCGHTWR).

The protein belongs to the archaeal RpoM/eukaryotic RPA12/RPB9/RPC11 RNA polymerase family.

Its function is as follows. Induces RNA cleavage activity in the RNA polymerase. In its presence, the cleavage activity of the RNA polymerase truncates the RNA back to position +15 in a stepwise manner by releasing mainly dinucleotides from the 3'-end of the nascent RNA. The truncated RNAs are able to continue elongation. Involved in transcriptional proofreading and fidelity. Misincorporation of nucleotides during elongation of transcription leads to arrested elongation complexes which are rescued by TFS-promoted removal of a dinucleotide from the 3'-end. TFS is able to induce a cleavage resynthesis cycle in stalled elongation complexes (resulting from the next missing nucleotide or a reduced incorporation rate of a wrong nucleotide) preventing misincorporation and enabling proofreading in a post-incorporation manner. Pausing of elongation complexes is the main determinant of TFS-induced RNA cleavage. The polypeptide is Transcription factor S (Methanothermococcus thermolithotrophicus (Methanococcus thermolithotrophicus)).